A 1858-amino-acid polypeptide reads, in one-letter code: Inactive histone-lysine N-methyltransferase 2E (1858 aa).

The short motif at 63-66 (DHNY) is the HCFC1-binding motif (HBM) element. Residues 118 to 166 (VTRCICGFTHDDGYMICCDKCSVWQHIDCMGIDRQHIPDTYLCERCQPR) form a PHD-type zinc finger. Positions 121, 123, 135, 138, 143, 146, 160, and 163 each coordinate Zn(2+). A disordered region spans residues 217–269 (ASRVSKVNDKRRKKSGEKEQHISKCKKAFREGSRKSSRVKGSAPEIDPSSDGS). Residues 232-250 (GEKEQHISKCKKAFREGSR) are compositionally biased toward basic and acidic residues. The region spanning 330-447 (PPVESHIQKN…KGTEITIAFD (118 aa)) is the SET domain. An O-linked (GlcNAc) serine glycan is attached at Ser-435. A glycan (O-linked (GlcNAc) threonine) is linked at Thr-440. The disordered stretch occupies residues 475–530 (SESMENINSGYETRRKKGKKDKDISKEKDTQNQNITLDCEGTTNKMKSPETKQRKL). Residues 494–504 (KDKDISKEKDT) show a composition bias toward basic and acidic residues. Residues 505–520 (QNQNITLDCEGTTNKM) show a composition bias toward polar residues. Residues 559–615 (VEMESEEQIAERKRKMTREERKMEAILQAFARLEKREKRREQALERISTAKTEVKTE) are a coiled coil. Phosphoserine is present on Ser-623. A disordered region spans residues 630–687 (EQAKEENASKPTPAKVNRTKQRKSFSRSRTHIGQQRRRHRTVSMCSDIQPSSPDIEVT). Over residues 646–670 (NRTKQRKSFSRSRTHIGQQRRRHRT) the composition is skewed to basic residues. Over residues 672 to 687 (SMCSDIQPSSPDIEVT) the composition is skewed to polar residues. Phosphoserine is present on residues Ser-837 and Ser-845. 2 stretches are compositionally biased toward low complexity: residues 887–901 (TSTP…PTHT) and 933–957 (PVTP…PESS). Disordered regions lie at residues 887–960 (TSTP…SPEI) and 1039–1068 (LETP…SSWV). Over residues 1039 to 1048 (LETPAHDRAE) the composition is skewed to basic and acidic residues. Residues 1049 to 1068 (PNSQLDSTHSGRGTMYSSWV) are compositionally biased toward polar residues. Ser-1070 carries the phosphoserine modification. Disordered regions lie at residues 1164 to 1561 (KRQR…QNQQ) and 1581 to 1835 (VFTS…PVPG). 2 stretches are compositionally biased toward polar residues: residues 1186–1206 (PHAS…NDNG) and 1222–1235 (TVYN…SNNC). Ser-1273 carries the phosphoserine modification. Residues 1273 to 1282 (SDHRKDKDSG) are compositionally biased toward basic and acidic residues. Composition is skewed to low complexity over residues 1285 to 1303 (SPCV…SSHS) and 1349 to 1362 (KSPP…SPGS). A Phosphoserine modification is found at Ser-1359. 2 stretches are compositionally biased toward polar residues: residues 1400-1432 (QQKQ…SQKL) and 1506-1542 (LPAN…LNST). Over residues 1543–1553 (APPPPPPPPPS) the composition is skewed to pro residues. Residues 1581 to 1599 (VFTSGPNQALPGTTSQQTV) show a composition bias toward polar residues. The span at 1626 to 1637 (VPPPPPPPPAPG) shows a compositional bias: pro residues. Polar residues predominate over residues 1642 to 1651 (QQPNSHQQHS). The span at 1677–1687 (LPPPPPPPGPA) shows a compositional bias: pro residues. Polar residues predominate over residues 1698–1711 (TGLQGLQAQHQHVV). Over residues 1714–1724 (APPPPPPPPPS) the composition is skewed to pro residues. Positions 1798–1808 (QGPNSIPTPTA) are enriched in polar residues.

It belongs to the class V-like SAM-binding methyltransferase superfamily. Histone-lysine methyltransferase family. TRX/MLL subfamily. In terms of assembly, component of a complex composed of KMT2E (isoform 3), OGT and USP7; the complex stabilizes KMT2E, preventing KMT2E ubiquitination and proteasomal-mediated degradation. Isoform 3 interacts (via N-terminus) with OGT (via TRP repeats). Isoform 3 interacts with deubiquitinating enzyme USP7 (via MATH domain). Isoform 3 interacts (via HBM motif) with HCFC1 (via Kelch domain). Isoform 3 interacts with E2F1; the interaction is probably indirect and is mediated via HCFC1. In terms of processing, ubiquitinated. Deubiquitinated by USP7. O-glycosylated at Ser-435 and Thr-440 in the SET domain by OGT which probably prevents KMT2E proteasomal-mediated degradation. In terms of tissue distribution, widely expressed in both adult and fetal tissues. Highest levels of expression observed in fetal thymus and kidney and in adult hematopoietic tissues, jejunum and cerebellum. Isoform NKp44L: Not detected on circulating cells from healthy individuals, but is expressed on a large panel of tumor and transformed cells.

It is found in the chromosome. It localises to the cytoplasm. Its subcellular location is the cytoskeleton. The protein resides in the microtubule organizing center. The protein localises to the centrosome. It is found in the nucleus speckle. It localises to the nucleus. Its subcellular location is the nucleoplasm. The protein resides in the cell membrane. Associates with chromatin regions downstream of transcriptional start sites of active genes and thus regulates gene transcription. Chromatin interaction is mediated via the binding to tri-methylated histone H3 at 'Lys-4' (H3K4me3). Key regulator of hematopoiesis involved in terminal myeloid differentiation and in the regulation of hematopoietic stem cell (HSCs) self-renewal by a mechanism that involves DNA methylation. Also acts as an important cell cycle regulator, participating in cell cycle regulatory network machinery at multiple cell cycle stages including G1/S transition, S phase progression and mitotic entry. Recruited to E2F1 responsive promoters by HCFC1 where it stimulates tri-methylation of histone H3 at 'Lys-4' and transcriptional activation and thereby facilitates G1 to S phase transition. During myoblast differentiation, required to suppress inappropriate expression of S-phase-promoting genes and maintain expression of determination genes in quiescent cells. In terms of biological role, cellular ligand for NCR2/NKp44, may play a role as a danger signal in cytotoxicity and NK-cell-mediated innate immunity. The chain is Inactive histone-lysine N-methyltransferase 2E (KMT2E) from Homo sapiens (Human).